A 430-amino-acid polypeptide reads, in one-letter code: Tol-Pal system protein TolB (430 aa).

The N-terminal stretch at 1–21 (MKQAFRVALSVLMLFVAVAHA) is a signal peptide.

The protein belongs to the TolB family. As to quaternary structure, the Tol-Pal system is composed of five core proteins: the inner membrane proteins TolA, TolQ and TolR, the periplasmic protein TolB and the outer membrane protein Pal. They form a network linking the inner and outer membranes and the peptidoglycan layer.

The protein localises to the periplasm. Its function is as follows. Part of the Tol-Pal system, which plays a role in outer membrane invagination during cell division and is important for maintaining outer membrane integrity. TolB occupies a key intermediary position in the Tol-Pal system because it communicates directly with both membrane-embedded components, Pal in the outer membrane and TolA in the inner membrane. This is Tol-Pal system protein TolB from Erwinia tasmaniensis (strain DSM 17950 / CFBP 7177 / CIP 109463 / NCPPB 4357 / Et1/99).